The sequence spans 603 residues: Deuterosome assembly protein 1 (603 aa).

Coiled coils occupy residues 14-59 (CEAE…NAQT), 85-197 (MTQN…GKKQ), 227-278 (IEKL…ELQS), 336-399 (QDQP…KQLK), and 454-480 (HTSI…NGKS). Position 546 is a phosphoserine (S546). A coiled-coil region spans residues 557–600 (AAQHFLLEEEKRAKELEKLLNTHIDELQRHTEFTLNKYSKLKQN).

Belongs to the CEP63 family. In terms of assembly, interacts with CEP152; the interaction is mutually exclusive with CEP63.

Its subcellular location is the cytoplasm. Its function is as follows. Key structural component of the deuterosome, a structure that promotes de novo centriole amplification in multiciliated cells. Deuterosome-mediated centriole amplification occurs in terminally differentiated multiciliated cells and can generate more than 100 centrioles. Probably sufficient for the specification and formation of the deuterosome inner core. Interacts with CEP152 and recruits PLK4 to activate centriole biogenesis. The protein is Deuterosome assembly protein 1 of Macaca fascicularis (Crab-eating macaque).